Consider the following 299-residue polypeptide: Ribonuclease H2 subunit A (299 aa).

Residue Met1 is modified to N-acetylmethionine. Residues 28–251 form the RNase H type-2 domain; the sequence is PCVLGVDEAG…AQSILESEAE (224 aa). Residues Asp34, Glu35, and Asp142 each coordinate a divalent metal cation. A phosphothreonine mark is found at Thr205 and Thr217. Residues 250-272 form a disordered region; it reads AEDVKWEDSETGDPKGPGKIKSY. A Phosphoserine modification is found at Ser258.

It belongs to the RNase HII family. Eukaryotic subfamily. As to quaternary structure, the RNase H2 complex is a heterotrimer composed of the catalytic subunit RNASEH2A and the non-catalytic subunits RNASEH2B and RNASEH2C. The cofactor is Mn(2+). Mg(2+) serves as cofactor.

The protein resides in the nucleus. The catalysed reaction is Endonucleolytic cleavage to 5'-phosphomonoester.. Its function is as follows. Catalytic subunit of RNase HII, an endonuclease that specifically degrades the RNA of RNA:DNA hybrids. Participates in DNA replication, possibly by mediating the removal of lagging-strand Okazaki fragment RNA primers during DNA replication. Mediates the excision of single ribonucleotides from DNA:RNA duplexes. This is Ribonuclease H2 subunit A (RNASEH2A) from Bos taurus (Bovine).